The chain runs to 544 residues: Chaperonin GroEL (544 aa).

ATP contacts are provided by residues 30 to 33 (TLGP), Lys-51, 87 to 91 (DGTTT), Gly-415, and Asp-495.

It belongs to the chaperonin (HSP60) family. Forms a cylinder of 14 subunits composed of two heptameric rings stacked back-to-back. Interacts with the co-chaperonin GroES.

It is found in the cytoplasm. The catalysed reaction is ATP + H2O + a folded polypeptide = ADP + phosphate + an unfolded polypeptide.. In terms of biological role, together with its co-chaperonin GroES, plays an essential role in assisting protein folding. The GroEL-GroES system forms a nano-cage that allows encapsulation of the non-native substrate proteins and provides a physical environment optimized to promote and accelerate protein folding. The chain is Chaperonin GroEL from Bartonella bacilliformis (strain ATCC 35685 / KC583 / Herrer 020/F12,63).